The chain runs to 125 residues: MANLMMRLPISLRSFSVSASSSNGSPPVIGGSSGGVGPMIVELPLEKIRRPLMRTRSNDQNKVKELMDSIRQIGLQVPIDVIEVDGTYYGFSGCHRYEAHQKLGLPTIRCKIRKGTKETLRHHLR.

A chloroplast and mitochondrion-targeting transit peptide spans 1–22 (MANLMMRLPISLRSFSVSASSS).

The protein belongs to the sulfiredoxin family. Low expression in photosynthetic tissues such as leaves and sepals.

It is found in the plastid. It localises to the chloroplast. The protein localises to the mitochondrion. It carries out the reaction S-hydroxy-S-oxy-L-cysteinyl-[peroxiredoxin] + [protein]-dithiol + ATP = S-hydroxy-L-cysteinyl-[peroxiredoxin] + [protein]-disulfide + ADP + phosphate. Contributes to oxidative stress resistance by reducing cysteine-sulfinic acid formed under exposure to oxidants in a peroxiredoxin. May catalyze the reduction in a multi-step process by acting both as a specific phosphotransferase and a thioltransferase. Required to switch on the antioxidant pathway to regenerate the oxidative damage. In mitochondrion, catalyzes the retroreduction of the inactive sulfinic form of atypical Prx IIF using thioredoxin as reducing agent. This Arabidopsis thaliana (Mouse-ear cress) protein is Sulfiredoxin, chloroplastic/mitochondrial (SRX).